A 414-amino-acid polypeptide reads, in one-letter code: Snake venom metalloproteinase (414 aa).

Residues 1–20 (MIEVLLVTICLAVFPYQGSS) form the signal peptide. Residues 21-190 (IILESGNVND…KASDLNFNSD (170 aa)) constitute a propeptide that is removed on maturation. Glutamine 191 bears the Pyrrolidone carboxylic acid mark. In terms of domain architecture, Peptidase M12B spans 197–393 (RYVELVIVAD…YKPQCILNKP (197 aa)). Ca(2+)-binding residues include glutamate 200 and aspartate 284. 2 cysteine pairs are disulfide-bonded: cysteine 308-cysteine 388 and cysteine 348-cysteine 355. Histidine 333 lines the Zn(2+) pocket. The active site involves glutamate 334. Zn(2+) contacts are provided by histidine 337 and histidine 343. The Ca(2+) site is built by cysteine 388 and asparagine 391. Positions 394 to 414 (LRIDPVSTPVSGNELLEAGEE) are excised as a propeptide.

This sequence belongs to the venom metalloproteinase (M12B) family. P-I subfamily. As to quaternary structure, monomer. Zn(2+) is required as a cofactor. Expressed by the venom gland.

The protein localises to the secreted. Functionally, snake venom metalloproteinase that impairs hemostasis in the envenomed animal. The chain is Snake venom metalloproteinase from Crotalus molossus molossus (Northern black-tailed rattlesnake).